Consider the following 188-residue polypeptide: Peptidyl-tRNA hydrolase (188 aa).

Y14 contacts tRNA. Catalysis depends on H19, which acts as the Proton acceptor. TRNA contacts are provided by Y64, N66, and N112.

This sequence belongs to the PTH family. As to quaternary structure, monomer.

The protein resides in the cytoplasm. It carries out the reaction an N-acyl-L-alpha-aminoacyl-tRNA + H2O = an N-acyl-L-amino acid + a tRNA + H(+). Functionally, hydrolyzes ribosome-free peptidyl-tRNAs (with 1 or more amino acids incorporated), which drop off the ribosome during protein synthesis, or as a result of ribosome stalling. Catalyzes the release of premature peptidyl moieties from peptidyl-tRNA molecules trapped in stalled 50S ribosomal subunits, and thus maintains levels of free tRNAs and 50S ribosomes. The polypeptide is Peptidyl-tRNA hydrolase (Bacillus licheniformis (strain ATCC 14580 / DSM 13 / JCM 2505 / CCUG 7422 / NBRC 12200 / NCIMB 9375 / NCTC 10341 / NRRL NRS-1264 / Gibson 46)).